Reading from the N-terminus, the 217-residue chain is MAGGYRAEDDYDYLFKLVLIGDSGVGKSNLLSRFSRNEFNLESKSTIGVEFATRSIRVDDKIVKAQIWDTAGQERYRAITSAYYRGAVGALVVYDITRHVTFENVERWLKELRDHTDQNIVIMLVGNKADLRHLRAVSTEDAKAFAERENTFFMETSALESLNVENAFTEVLTEIYKVVCRKALEVGDDPAALPKGQTINVGKDDVSAVKKVGCCSS.

Residue 21–28 (GDSGVGKS) coordinates GTP. The Effector region signature appears at 43–51 (SKSTIGVEF). GTP is bound by residues 69-73 (DTAGQ) and 127-130 (NKAD). 2 S-geranylgeranyl cysteine lipidation sites follow: C214 and C215.

It belongs to the small GTPase superfamily. Rab family.

The protein resides in the cell membrane. This chain is Ras-related protein Rab11B (RAB11B), found in Nicotiana tabacum (Common tobacco).